The sequence spans 465 residues: Ribulose bisphosphate carboxylase large chain (465 aa).

K4 bears the N6,N6,N6-trimethyllysine mark. A substrate-binding site is contributed by T163. K165 serves as the catalytic Proton acceptor. K167 provides a ligand contact to substrate. Positions 191, 193, and 194 each coordinate Mg(2+). K191 is modified (N6-carboxylysine). H284 functions as the Proton acceptor in the catalytic mechanism. Substrate-binding residues include R285, H317, and S369.

It belongs to the RuBisCO large chain family. Type I subfamily. In terms of assembly, heterohexadecamer of 8 large chains and 8 small chains; disulfide-linked. The disulfide link is formed within the large subunit homodimers. The cofactor is Mg(2+). The disulfide bond which can form in the large chain dimeric partners within the hexadecamer appears to be associated with oxidative stress and protein turnover.

The protein resides in the plastid. The protein localises to the chloroplast. It catalyses the reaction 2 (2R)-3-phosphoglycerate + 2 H(+) = D-ribulose 1,5-bisphosphate + CO2 + H2O. The catalysed reaction is D-ribulose 1,5-bisphosphate + O2 = 2-phosphoglycolate + (2R)-3-phosphoglycerate + 2 H(+). Functionally, ruBisCO catalyzes two reactions: the carboxylation of D-ribulose 1,5-bisphosphate, the primary event in carbon dioxide fixation, as well as the oxidative fragmentation of the pentose substrate in the photorespiration process. Both reactions occur simultaneously and in competition at the same active site. The protein is Ribulose bisphosphate carboxylase large chain of Trochodendron aralioides (Wheel tree).